The primary structure comprises 590 residues: Cytidine monophosphate-N-acetylneuraminic acid hydroxylase (590 aa).

Residues 14–112 (LSPVEVASLK…VEMDENNRLL (99 aa)) form the Rieske domain. [2Fe-2S] cluster is bound by residues C54, H56, C75, and H78.

The protein belongs to the CMP-Neu5Ac hydroxylase family. It depends on [2Fe-2S] cluster as a cofactor.

The protein localises to the cytoplasm. The catalysed reaction is CMP-N-acetyl-beta-neuraminate + 2 Fe(II)-[cytochrome b5] + O2 + 2 H(+) = CMP-N-glycoloyl-beta-neuraminate + 2 Fe(III)-[cytochrome b5] + H2O. It functions in the pathway amino-sugar metabolism; N-acetylneuraminate metabolism. Functionally, sialic acids are components of carbohydrate chains of glycoconjugates and are involved in cell-cell recognition and cell-pathogen interactions. Catalyzes the conversion of CMP-N-acetylneuraminic acid (CMP-Neu5Ac) into its hydroxylated derivative CMP-N-glycolylneuraminic acid (CMP-Neu5Gc), a sialic acid abundantly expressed at the surface of many cells. In Pan troglodytes (Chimpanzee), this protein is Cytidine monophosphate-N-acetylneuraminic acid hydroxylase.